Here is a 401-residue protein sequence, read N- to C-terminus: Adenosine 3'-phospho 5'-phosphosulfate transporter 2 (401 aa).

N-linked (GlcNAc...) asparagine glycosylation is found at Asn-12 and Asn-71. 6 consecutive transmembrane segments (helical) span residues 78–98, 114–134, 147–167, 170–190, 196–216, and 223–243; these read LTQF…YGYL, YLTL…LQLI, MIIA…LGYL, PTQV…GVFI, NVAD…FTLA, and NFNL…AVIG. A glycan (N-linked (GlcNAc...) asparagine) is linked at Asn-254. Helical transmembrane passes span 267–287, 298–317, 324–346, and 349–369; these read IGFV…PAVT, GYAF…VLAL, LIAV…IFFA, and FTFQ…LNVY.

This sequence belongs to the nucleotide-sugar transporter family. SLC35B subfamily. Preferentially and highly expressed in colon.

The protein resides in the golgi apparatus membrane. It carries out the reaction 3'-phosphoadenylyl sulfate(in) + adenosine 3',5'-bisphosphate(out) = 3'-phosphoadenylyl sulfate(out) + adenosine 3',5'-bisphosphate(in). Probably functions as a 3'-phosphoadenylyl sulfate:adenosine 3',5'-bisphosphate antiporter at the Golgi membranes. Mediates the transport from the cytosol into the lumen of the Golgi of 3'-phosphoadenylyl sulfate/adenosine 3'-phospho 5'-phosphosulfate (PAPS), a universal sulfuryl donor for sulfation events that take place in that compartment. The sequence is that of Adenosine 3'-phospho 5'-phosphosulfate transporter 2 from Homo sapiens (Human).